The sequence spans 88 residues: MKLLVVYDVSDDSKRNKLANNLKKLGLERIQRSAFEGDIDSQRVKDLVRVVKLIVDTNTDIVHIIPLGIRDWERRIVIGREGLEEWLV.

Aspartate 8 is a Mg(2+) binding site.

This sequence belongs to the CRISPR-associated endoribonuclease Cas2 protein family. In terms of assembly, homodimer, forms a heterotetramer with a Cas1 homodimer. Mg(2+) serves as cofactor.

In terms of biological role, CRISPR (clustered regularly interspaced short palindromic repeat), is an adaptive immune system that provides protection against mobile genetic elements (viruses, transposable elements and conjugative plasmids). CRISPR clusters contain sequences complementary to antecedent mobile elements and target invading nucleic acids. CRISPR clusters are transcribed and processed into CRISPR RNA (crRNA). Functions as a ssRNA-specific endoribonuclease. Involved in the integration of spacer DNA into the CRISPR cassette. The sequence is that of CRISPR-associated endoribonuclease Cas2 2 (cas22) from Saccharolobus solfataricus (strain ATCC 35092 / DSM 1617 / JCM 11322 / P2) (Sulfolobus solfataricus).